The following is a 223-amino-acid chain: Noggin (223 aa).

A signal peptide spans 1–26 (MDPPRLRVATYLLLLSVGLLLHGGAC). Asn-61 carries an N-linked (GlcNAc...) asparagine glycan. Disulfide bonds link Cys-143–Cys-180, Cys-166–Cys-217, Cys-172–Cys-219, and Cys-195–Cys-204.

This sequence belongs to the noggin family. In terms of assembly, homodimer.

It is found in the secreted. Its function is as follows. Inhibitor of bone morphogenetic proteins (BMP) signaling. This Takifugu rubripes (Japanese pufferfish) protein is Noggin (nog).